The following is a 236-amino-acid chain: MDDFAYNLRRAETGVLLLADDLTVTAVSPGALSLLGLDKPGALLGRPILDLHPPPLRPKVAVLLKTARGPSGPAATAVLSLRGGPVLIRASALTGQGETAFALVLTAVGESRETKEGPSARPAPPGYLRKVPLGLGETTEFVDTAGVIYLEADGHYSRVHTAFGHSFCPLALAELERRLDPDQFLRVHRSYIVALAHVRAFRKRESGGLLVMDTGAGDLVPIGRAQVTRLRGLLAI.

Positions 1–64 (MDDFAYNLRR…PLRPKVAVLL (64 aa)) constitute a PAS domain. Heme is bound at residue His-52. The HTH LytTR-type domain maps to 131 to 236 (VPLGLGETTE…VTRLRGLLAI (106 aa)).

Requires heme as cofactor.

Its function is as follows. Activates the expression of the CowN protein in response to carbon monoxide (CO). Is required to sustain N(2)-dependent growth in the presence of low levels of carbon monoxide (CO). This Rhodospirillum rubrum (strain ATCC 11170 / ATH 1.1.1 / DSM 467 / LMG 4362 / NCIMB 8255 / S1) protein is CO-responsive transcriptional regulator RcoM (rcoM).